A 638-amino-acid chain; its full sequence is DNA mismatch repair protein MutL (638 aa).

A disordered region spans residues 404 to 433; sequence FGTQTNAFGSMATPRDNSRGNYSAGESRQR.

Belongs to the DNA mismatch repair MutL/HexB family.

Its function is as follows. This protein is involved in the repair of mismatches in DNA. It is required for dam-dependent methyl-directed DNA mismatch repair. May act as a 'molecular matchmaker', a protein that promotes the formation of a stable complex between two or more DNA-binding proteins in an ATP-dependent manner without itself being part of a final effector complex. The chain is DNA mismatch repair protein MutL from Shewanella baltica (strain OS195).